Consider the following 200-residue polypeptide: HTH-type transcriptional regulator BetI (200 aa).

One can recognise an HTH tetR-type domain in the interval 8 to 68 (DIRKPQLVQA…ETMREILRQL (61 aa)). Positions 31–50 (SIALISKEAGVSTGIINHYF) form a DNA-binding region, H-T-H motif.

It participates in amine and polyamine biosynthesis; betaine biosynthesis via choline pathway [regulation]. Repressor involved in the biosynthesis of the osmoprotectant glycine betaine. It represses transcription of the choline transporter BetT and the genes of BetAB involved in the synthesis of glycine betaine. This Vibrio atlanticus (strain LGP32) (Vibrio splendidus (strain Mel32)) protein is HTH-type transcriptional regulator BetI.